A 734-amino-acid chain; its full sequence is Photosystem I P700 chlorophyll a apoprotein A2 (734 aa).

Helical transmembrane passes span 46–69 (IFAS…FHVA), 135–158 (LYTG…FHLQ), 175–199 (LNHH…HVAI), 273–291 (IAHH…GHMY), 330–353 (LHFQ…QHMY), 369–395 (AALY…IFFI), 417–439 (AIIS…LYVH), and 517–535 (FLVH…LILV). [4Fe-4S] cluster-binding residues include Cys559 and Cys568. The next 2 membrane-spanning stretches (helical) occupy residues 575-596 (AFYL…YWHW) and 643-665 (LSVW…MFLI). The chlorophyll a site is built by His654, Met662, and Tyr670. Trp671 contributes to the phylloquinone binding site. The chain crosses the membrane as a helical span at residues 707-727 (LVGLAHFSVGYIFTYAAFLIA).

It belongs to the PsaA/PsaB family. As to quaternary structure, the PsaA/B heterodimer binds the P700 chlorophyll special pair and subsequent electron acceptors. PSI consists of a core antenna complex that captures photons, and an electron transfer chain that converts photonic excitation into a charge separation. The eukaryotic PSI reaction center is composed of at least 11 subunits. It depends on P700 is a chlorophyll a/chlorophyll a' dimer, A0 is one or more chlorophyll a, A1 is one or both phylloquinones and FX is a shared 4Fe-4S iron-sulfur center. as a cofactor.

The protein localises to the plastid. The protein resides in the chloroplast thylakoid membrane. The enzyme catalyses reduced [plastocyanin] + hnu + oxidized [2Fe-2S]-[ferredoxin] = oxidized [plastocyanin] + reduced [2Fe-2S]-[ferredoxin]. In terms of biological role, psaA and PsaB bind P700, the primary electron donor of photosystem I (PSI), as well as the electron acceptors A0, A1 and FX. PSI is a plastocyanin-ferredoxin oxidoreductase, converting photonic excitation into a charge separation, which transfers an electron from the donor P700 chlorophyll pair to the spectroscopically characterized acceptors A0, A1, FX, FA and FB in turn. Oxidized P700 is reduced on the lumenal side of the thylakoid membrane by plastocyanin. The polypeptide is Photosystem I P700 chlorophyll a apoprotein A2 (Jasminum nudiflorum (Winter jasmine)).